The following is a 279-amino-acid chain: 3-methyl-2-oxobutanoate hydroxymethyltransferase (279 aa).

D43 and D82 together coordinate Mg(2+). 3-methyl-2-oxobutanoate is bound by residues 43–44, D82, and K112; that span reads DS. Position 114 (E114) interacts with Mg(2+). E181 (proton acceptor) is an active-site residue.

It belongs to the PanB family. Homodecamer; pentamer of dimers. The cofactor is Mg(2+).

Its subcellular location is the cytoplasm. It catalyses the reaction 3-methyl-2-oxobutanoate + (6R)-5,10-methylene-5,6,7,8-tetrahydrofolate + H2O = 2-dehydropantoate + (6S)-5,6,7,8-tetrahydrofolate. The protein operates within cofactor biosynthesis; (R)-pantothenate biosynthesis; (R)-pantoate from 3-methyl-2-oxobutanoate: step 1/2. Its function is as follows. Catalyzes the reversible reaction in which hydroxymethyl group from 5,10-methylenetetrahydrofolate is transferred onto alpha-ketoisovalerate to form ketopantoate. The sequence is that of 3-methyl-2-oxobutanoate hydroxymethyltransferase from Geobacillus sp. (strain WCH70).